A 464-amino-acid chain; its full sequence is MPSLPLLLLLWAASSYSFPVFHNGDRQNVETVWKYLENYYNLGKNMQAKNVNGKEMMAEKLRQMQQLFGLKVTGNSDPETLRAMKKPRCGVPDVAPYAITHNNPRWTKTHLTYSILNYTPYLPKAVVEDAIARAFRVWSDVTPLTFQRVFEEEGDIVLSFHRGDHGDNNPFDGPNYKLAHTFQPGPGLGGDVHYDLDETWTNSSENFNLFYVTAHELGHSLGLTHSSDIGALMFPSYTWYTEDFVLNQDDINRIQDLYGPSPNPIQPTGATTPHPCNGDLTFDAITTFRGEVFFFKGRFYIRVNRFMPEPELNLIGILWPNLPVKLDAAYEASMIDQVRYFKGSKVWAVQEQSVLRGFPRDIHSFFGFPSNVTHIDAAVCEEETGKTYFFVDHMYWRYDENTQSMDPGYPRLTAEDFPGIDDKVDDVFQKGENFYFFHQSVQHRFNLQIRRVDDSRDSSTWFNC.

An N-terminal signal peptide occupies residues 1–17; the sequence is MPSLPLLLLLWAASSYS. Residues 18–96 constitute a propeptide, activation peptide; that stretch reads FPVFHNGDRQ…PRCGVPDVAP (79 aa). A Cysteine switch motif is present at residues 87-94; it reads PRCGVPDV. C89 serves as a coordination point for Zn(2+). Residues 95–274 form a metalloprotease region; that stretch reads APYAITHNNP…IQPTGATTPH (180 aa). D155 is a binding site for Ca(2+). Residues H165 and D167 each coordinate Zn(2+). D172 and G173 together coordinate Ca(2+). A Zn(2+)-binding site is contributed by H180. The Ca(2+) site is built by G187, G189, and D191. H193 contacts Zn(2+). Ca(2+) is bound by residues D195 and E198. N202 is a glycosylation site (N-linked (GlcNAc...) asparagine). H215 is a Zn(2+) binding site. E216 is an active-site residue. Positions 219 and 225 each coordinate Zn(2+). 2 Hemopexin repeats span residues 273–322 and 323–369; these read PHPC…WPNL and PVKL…FGFP. A disulfide bridge connects residues C276 and C464. Residue D283 coordinates Ca(2+). An N-linked (GlcNAc...) asparagine glycan is attached at N371. Hemopexin repeat units follow at residues 372 to 420 and 421 to 464; these read VTHI…FPGI and DDKV…WFNC. The Ca(2+) site is built by D376 and D425.

This sequence belongs to the peptidase M10A family. It depends on Ca(2+) as a cofactor. Requires Zn(2+) as cofactor.

It localises to the secreted. The protein resides in the extracellular space. It is found in the extracellular matrix. The catalysed reaction is Cleavage of the triple helix of collagen at about three-quarters of the length of the molecule from the N-terminus, at 775-Gly-|-Ile-776 in the alpha1(I) chain. Cleaves synthetic substrates and alpha-macroglobulins at bonds where P1' is a hydrophobic residue.. With respect to regulation, can be activated without removal of the activation peptide. Cleaves collagens of types I, II, and III at one site in the helical domain. Also cleaves collagens of types VII and X. Able to degrade synthetic peptides and type I and II fibrillar collagen. The protein is Interstitial collagenase A (Mmp1a) of Mus musculus (Mouse).